The primary structure comprises 430 residues: GTPase Obg (430 aa).

In terms of domain architecture, Obg spans 1-158 (MFVDQVKISL…LDVSLELKLL (158 aa)). The interval 118-145 (KGGRGGRGNSRFATPRNPAPDFSEKGEP) is disordered. Residues 159 to 329 (ADVGLVGFPS…LLYAIADKLE (171 aa)) form the OBG-type G domain. GTP is bound by residues 165–172 (GFPSVGKS), 190–194 (FTTIK), 212–215 (DLPG), 282–285 (NKMD), and 310–312 (STI). Mg(2+) contacts are provided by Ser172 and Thr192. The OCT domain occupies 352–430 (KHTPSQDKFT…ILGGEFEFVE (79 aa)).

Belongs to the TRAFAC class OBG-HflX-like GTPase superfamily. OBG GTPase family. As to quaternary structure, monomer. The cofactor is Mg(2+).

It is found in the cytoplasm. An essential GTPase which binds GTP, GDP and possibly (p)ppGpp with moderate affinity, with high nucleotide exchange rates and a fairly low GTP hydrolysis rate. Plays a role in control of the cell cycle, stress response, ribosome biogenesis and in those bacteria that undergo differentiation, in morphogenesis control. In Staphylococcus aureus (strain bovine RF122 / ET3-1), this protein is GTPase Obg.